The following is a 267-amino-acid chain: tRNA pseudouridine synthase A (267 aa).

Aspartate 53 acts as the Nucleophile in catalysis. Tyrosine 114 is a substrate binding site.

Belongs to the tRNA pseudouridine synthase TruA family. As to quaternary structure, homodimer.

It catalyses the reaction uridine(38/39/40) in tRNA = pseudouridine(38/39/40) in tRNA. Its function is as follows. Formation of pseudouridine at positions 38, 39 and 40 in the anticodon stem and loop of transfer RNAs. This chain is tRNA pseudouridine synthase A, found in Chlamydia trachomatis serovar A (strain ATCC VR-571B / DSM 19440 / HAR-13).